The sequence spans 113 residues: Nucleoid-associated protein sync_0026 (113 aa).

This sequence belongs to the YbaB/EbfC family. In terms of assembly, homodimer.

It localises to the cytoplasm. It is found in the nucleoid. Binds to DNA and alters its conformation. May be involved in regulation of gene expression, nucleoid organization and DNA protection. In Synechococcus sp. (strain CC9311), this protein is Nucleoid-associated protein sync_0026.